A 419-amino-acid chain; its full sequence is Serine--tRNA ligase (419 aa).

L-serine is bound at residue 226 to 228; it reads TSE. ATP-binding positions include 257 to 259 and Val-273; that span reads RRE. L-serine is bound at residue Glu-280. 344 to 347 contacts ATP; it reads ELTS. Thr-379 serves as a coordination point for L-serine.

It belongs to the class-II aminoacyl-tRNA synthetase family. Type-1 seryl-tRNA synthetase subfamily. In terms of assembly, homodimer. The tRNA molecule binds across the dimer.

It is found in the cytoplasm. The enzyme catalyses tRNA(Ser) + L-serine + ATP = L-seryl-tRNA(Ser) + AMP + diphosphate + H(+). It catalyses the reaction tRNA(Sec) + L-serine + ATP = L-seryl-tRNA(Sec) + AMP + diphosphate + H(+). It functions in the pathway aminoacyl-tRNA biosynthesis; selenocysteinyl-tRNA(Sec) biosynthesis; L-seryl-tRNA(Sec) from L-serine and tRNA(Sec): step 1/1. Its function is as follows. Catalyzes the attachment of serine to tRNA(Ser). Is also able to aminoacylate tRNA(Sec) with serine, to form the misacylated tRNA L-seryl-tRNA(Sec), which will be further converted into selenocysteinyl-tRNA(Sec). The sequence is that of Serine--tRNA ligase from Mycolicibacterium vanbaalenii (strain DSM 7251 / JCM 13017 / BCRC 16820 / KCTC 9966 / NRRL B-24157 / PYR-1) (Mycobacterium vanbaalenii).